The following is a 368-amino-acid chain: DNA replication and repair protein RecF (368 aa).

An ATP-binding site is contributed by 30 to 37 (GNNAQGKT).

It belongs to the RecF family.

It localises to the cytoplasm. The RecF protein is involved in DNA metabolism; it is required for DNA replication and normal SOS inducibility. RecF binds preferentially to single-stranded, linear DNA. It also seems to bind ATP. The protein is DNA replication and repair protein RecF of Streptococcus pyogenes serotype M12 (strain MGAS2096).